The primary structure comprises 490 residues: Protein nucleotidyltransferase YdiU (490 aa).

Residues glycine 94, glycine 96, arginine 97, lysine 117, aspartate 129, glycine 130, arginine 180, and arginine 187 each coordinate ATP. Catalysis depends on aspartate 256, which acts as the Proton acceptor. 2 residues coordinate Mg(2+): asparagine 257 and aspartate 266. ATP is bound at residue aspartate 266.

The protein belongs to the SELO family. Requires Mg(2+) as cofactor. Mn(2+) is required as a cofactor.

It catalyses the reaction L-seryl-[protein] + ATP = 3-O-(5'-adenylyl)-L-seryl-[protein] + diphosphate. It carries out the reaction L-threonyl-[protein] + ATP = 3-O-(5'-adenylyl)-L-threonyl-[protein] + diphosphate. The catalysed reaction is L-tyrosyl-[protein] + ATP = O-(5'-adenylyl)-L-tyrosyl-[protein] + diphosphate. The enzyme catalyses L-histidyl-[protein] + UTP = N(tele)-(5'-uridylyl)-L-histidyl-[protein] + diphosphate. It catalyses the reaction L-seryl-[protein] + UTP = O-(5'-uridylyl)-L-seryl-[protein] + diphosphate. It carries out the reaction L-tyrosyl-[protein] + UTP = O-(5'-uridylyl)-L-tyrosyl-[protein] + diphosphate. In terms of biological role, nucleotidyltransferase involved in the post-translational modification of proteins. It can catalyze the addition of adenosine monophosphate (AMP) or uridine monophosphate (UMP) to a protein, resulting in modifications known as AMPylation and UMPylation. The protein is Protein nucleotidyltransferase YdiU of Clostridium perfringens (strain ATCC 13124 / DSM 756 / JCM 1290 / NCIMB 6125 / NCTC 8237 / Type A).